The following is a 79-amino-acid chain: Large ribosomal subunit protein uL22 (79 aa).

This sequence belongs to the universal ribosomal protein uL22 family. As to quaternary structure, part of the 50S ribosomal subunit.

Its function is as follows. This protein binds specifically to 23S rRNA; its binding is stimulated by other ribosomal proteins, e.g. L4, L17, and L20. It is important during the early stages of 50S assembly. It makes multiple contacts with different domains of the 23S rRNA in the assembled 50S subunit and ribosome. In terms of biological role, the globular domain of the protein is located near the polypeptide exit tunnel on the outside of the subunit, while an extended beta-hairpin is found that lines the wall of the exit tunnel in the center of the 70S ribosome. This chain is Large ribosomal subunit protein uL22 (rplV), found in Prunus armeniaca phytoplasma.